A 654-amino-acid chain; its full sequence is Threonine--tRNA ligase (654 aa).

Positions 1–63 constitute a TGS domain; sequence MAQISLTFPD…DADASIAIHT (63 aa). The tract at residues 247 to 544 is catalytic; that stretch reads DHRKLGREMN…LIENFAGKLP (298 aa). The Zn(2+) site is built by cysteine 344, histidine 395, and histidine 521.

It belongs to the class-II aminoacyl-tRNA synthetase family. Homodimer. It depends on Zn(2+) as a cofactor.

Its subcellular location is the cytoplasm. The catalysed reaction is tRNA(Thr) + L-threonine + ATP = L-threonyl-tRNA(Thr) + AMP + diphosphate + H(+). In terms of biological role, catalyzes the attachment of threonine to tRNA(Thr) in a two-step reaction: L-threonine is first activated by ATP to form Thr-AMP and then transferred to the acceptor end of tRNA(Thr). Also edits incorrectly charged L-seryl-tRNA(Thr). The sequence is that of Threonine--tRNA ligase from Dinoroseobacter shibae (strain DSM 16493 / NCIMB 14021 / DFL 12).